Here is a 179-residue protein sequence, read N- to C-terminus: Large ribosomal subunit protein uL5 (179 aa).

This sequence belongs to the universal ribosomal protein uL5 family. In terms of assembly, part of the 50S ribosomal subunit; part of the 5S rRNA/L5/L18/L25 subcomplex. Contacts the 5S rRNA and the P site tRNA. Forms a bridge to the 30S subunit in the 70S ribosome.

Functionally, this is one of the proteins that bind and probably mediate the attachment of the 5S RNA into the large ribosomal subunit, where it forms part of the central protuberance. In the 70S ribosome it contacts protein S13 of the 30S subunit (bridge B1b), connecting the 2 subunits; this bridge is implicated in subunit movement. Contacts the P site tRNA; the 5S rRNA and some of its associated proteins might help stabilize positioning of ribosome-bound tRNAs. The sequence is that of Large ribosomal subunit protein uL5 from Staphylococcus aureus (strain MW2).